A 472-amino-acid chain; its full sequence is Argininosuccinate lyase (472 aa).

This sequence belongs to the lyase 1 family. Argininosuccinate lyase subfamily.

The protein resides in the cytoplasm. It catalyses the reaction 2-(N(omega)-L-arginino)succinate = fumarate + L-arginine. The protein operates within amino-acid biosynthesis; L-arginine biosynthesis; L-arginine from L-ornithine and carbamoyl phosphate: step 3/3. The polypeptide is Argininosuccinate lyase (Synechococcus sp. (strain CC9605)).